Reading from the N-terminus, the 658-residue chain is DNA mismatch repair protein MutL (658 aa).

Positions 114-130 are enriched in basic and acidic residues; the sequence is RQEDSSHATQVKAEDGK. 3 disordered regions span residues 114–137, 369–401, and 438–457; these read RQED…PTAA, DYPT…APQQ, and FGNM…LSDG.

This sequence belongs to the DNA mismatch repair MutL/HexB family.

Functionally, this protein is involved in the repair of mismatches in DNA. It is required for dam-dependent methyl-directed DNA mismatch repair. May act as a 'molecular matchmaker', a protein that promotes the formation of a stable complex between two or more DNA-binding proteins in an ATP-dependent manner without itself being part of a final effector complex. The protein is DNA mismatch repair protein MutL of Neisseria meningitidis serogroup A / serotype 4A (strain DSM 15465 / Z2491).